The primary structure comprises 89 residues: Small ribosomal subunit protein uS15 (89 aa).

The segment covering 1-16 (MSVADIKKQDIVKDNG) has biased composition (basic and acidic residues). Residues 1-24 (MSVADIKKQDIVKDNGRSANDTGS) form a disordered region.

It belongs to the universal ribosomal protein uS15 family. As to quaternary structure, part of the 30S ribosomal subunit. Forms a bridge to the 50S subunit in the 70S ribosome, contacting the 23S rRNA.

Its function is as follows. One of the primary rRNA binding proteins, it binds directly to 16S rRNA where it helps nucleate assembly of the platform of the 30S subunit by binding and bridging several RNA helices of the 16S rRNA. In terms of biological role, forms an intersubunit bridge (bridge B4) with the 23S rRNA of the 50S subunit in the ribosome. The polypeptide is Small ribosomal subunit protein uS15 (Ralstonia pickettii (strain 12J)).